A 169-amino-acid chain; its full sequence is MDTNKIQGDKPIMNVEKIRQILPHRYPMLLVDRVMELVQNTSDSEPNGYIKAYKNVTINEEVFLGHFPNKPIYPGVMQIEGMAQAGGLLAFVSMFGDNVAEAKNKIVYFMTIDNVKFRIPVVPGDRLVYELKVLKHKGSIWQLGANAFVEDKLVSEAELKAMITEAKES.

Residue His66 is part of the active site.

It belongs to the thioester dehydratase family. FabZ subfamily.

The protein localises to the cytoplasm. It catalyses the reaction a (3R)-hydroxyacyl-[ACP] = a (2E)-enoyl-[ACP] + H2O. Functionally, involved in unsaturated fatty acids biosynthesis. Catalyzes the dehydration of short chain beta-hydroxyacyl-ACPs and long chain saturated and unsaturated beta-hydroxyacyl-ACPs. The sequence is that of 3-hydroxyacyl-[acyl-carrier-protein] dehydratase FabZ from Helicobacter hepaticus (strain ATCC 51449 / 3B1).